The primary structure comprises 128 residues: MGFLKFSPFLVVSILLLYQACSLQAVPLRSILESSPGMATLSEEEVRLLAALVQDYMQMKARELEQEEEQEAEGSSVTAQKRSCNTATCVTHRLAGLLSRSGGVVKDNFVPTNVGSEAFGRRRRDLQA.

A signal peptide spans 1-25 (MGFLKFSPFLVVSILLLYQACSLQA). A propeptide spanning residues 26 to 80 (VPLRSILESSPGMATLSEEEVRLLAALVQDYMQMKARELEQEEEQEAEGSSVTAQ) is cleaved from the precursor. Cys-84 and Cys-89 are oxidised to a cystine. Phe-119 bears the Phenylalanine amide mark. Residues 125-128 (DLQA) constitute a propeptide that is removed on maturation.

The protein belongs to the calcitonin family. Detected in nerve cells of cerebrum, hippocampus and pons/midbrain in newborns, and only in nerve cells of pons/midbrain in adult.

It is found in the secreted. Functionally, CGRP1/CALCA is a peptide hormone that induces vasodilation mediated by the CALCRL-RAMP1 receptor complex. Dilates a variety of vessels including the coronary, cerebral and systemic vasculature. Its abundance in the CNS also points toward a neurotransmitter or neuromodulator role. It also elevates platelet cAMP. CGRP1 can also bind and activate CALCR-RAMP1 (AMYR1) receptor complex. The protein is Calcitonin gene-related peptide 1 of Mus musculus (Mouse).